Consider the following 322-residue polypeptide: 4-hydroxythreonine-4-phosphate dehydrogenase (322 aa).

Substrate contacts are provided by His-131 and Thr-132. Residues His-161, His-206, and His-259 each contribute to the a divalent metal cation site. Lys-267, Asn-276, and Arg-285 together coordinate substrate.

This sequence belongs to the PdxA family. As to quaternary structure, homodimer. A divalent metal cation is required as a cofactor.

It localises to the cytoplasm. The catalysed reaction is 4-(phosphooxy)-L-threonine + NAD(+) = 3-amino-2-oxopropyl phosphate + CO2 + NADH. Its pathway is cofactor biosynthesis; pyridoxine 5'-phosphate biosynthesis; pyridoxine 5'-phosphate from D-erythrose 4-phosphate: step 4/5. Its function is as follows. Catalyzes the NAD(P)-dependent oxidation of 4-(phosphooxy)-L-threonine (HTP) into 2-amino-3-oxo-4-(phosphooxy)butyric acid which spontaneously decarboxylates to form 3-amino-2-oxopropyl phosphate (AHAP). The polypeptide is 4-hydroxythreonine-4-phosphate dehydrogenase (Sulfurihydrogenibium sp. (strain YO3AOP1)).